The following is a 175-amino-acid chain: uncharacterized protein (175 aa).

This is an uncharacterized protein from Mycobacterium tuberculosis (strain ATCC 25618 / H37Rv).